Here is a 155-residue protein sequence, read N- to C-terminus: S-ribosylhomocysteine lyase (155 aa).

Fe cation contacts are provided by H58, H62, and C125.

Belongs to the LuxS family. As to quaternary structure, homodimer. Fe cation serves as cofactor.

The catalysed reaction is S-(5-deoxy-D-ribos-5-yl)-L-homocysteine = (S)-4,5-dihydroxypentane-2,3-dione + L-homocysteine. Involved in the synthesis of autoinducer 2 (AI-2) which is secreted by bacteria and is used to communicate both the cell density and the metabolic potential of the environment. The regulation of gene expression in response to changes in cell density is called quorum sensing. Catalyzes the transformation of S-ribosylhomocysteine (RHC) to homocysteine (HC) and 4,5-dihydroxy-2,3-pentadione (DPD). This Helicobacter pylori (strain Shi470) protein is S-ribosylhomocysteine lyase.